The primary structure comprises 438 residues: Transcriptional enhancer factor TEF-3 (438 aa).

Over residues 1–18 the composition is skewed to polar residues; sequence MTSEWSSPASPEGSNDSG. 2 disordered regions span residues 1–36 and 195–217; these read MTSE…GVWS and QPSL…STPA. Positions 28 to 104 form a DNA-binding region, TEA; that stretch reads DNDAEGVWSP…QVLARRKARE (77 aa). The segment covering 205-216 has biased composition (low complexity); the sequence is SPTGLPPSSSTP.

In terms of tissue distribution, enriched in cardiac and skeletal muscle.

It is found in the nucleus. Functionally, transcription factor which plays a key role in the Hippo signaling pathway, a pathway involved in organ size control and tumor suppression by restricting proliferation and promoting apoptosis. The core of this pathway is composed of a kinase cascade wherein MST1/MST2, in complex with its regulatory protein SAV1, phosphorylates and activates LATS1/2 in complex with its regulatory protein MOB1, which in turn phosphorylates and inactivates YAP1 oncoprotein and WWTR1/TAZ. Binds m-cat elements from muscle-specific promoters and differentially activate transcription. Isoform B has probably a transactivation capacity that is lacking in the other isoforms. Isoform D may be defective in DNA binding. The sequence is that of Transcriptional enhancer factor TEF-3 (TEAD4) from Gallus gallus (Chicken).